We begin with the raw amino-acid sequence, 471 residues long: COP9 signalosome complex subunit 1 (471 aa).

Residues 249–411 (CFLLASFDHC…KILYARDVDQ (163 aa)) form the PCI domain. Positions 445–471 (HVKSPPREGSQGELTPANSQSRMSTNM) are disordered. Phosphoserine is present on residues Ser448 and Ser454. The span at 456–471 (GELTPANSQSRMSTNM) shows a compositional bias: polar residues. The residue at position 459 (Thr459) is a Phosphothreonine. Phosphoserine is present on Ser463.

This sequence belongs to the CSN1 family. As to quaternary structure, component of the CSN complex, composed of COPS1/GPS1, COPS2, COPS3, COPS4, COPS5, COPS6, COPS7 (COPS7A or COPS7B), COPS8 and COPS9. In the complex, it probably interacts directly with COPS2, COPS3, COPS4 and COPS5. Interacts directly with inositol kinase ITPK1. Interacts with CAPN8. Interacts with USP48. Interacts with ASB4; this interaction negatively regulates GPS1. In terms of tissue distribution, expressed in the base region of the oxyntic and pyloric mucosae.

Its subcellular location is the cytoplasm. The protein localises to the nucleus. Functionally, essential component of the COP9 signalosome complex (CSN), a complex involved in various cellular and developmental processes. The CSN complex is an essential regulator of the ubiquitin (Ubl) conjugation pathway by mediating the deneddylation of the cullin subunits of SCF-type E3 ligase complexes, leading to decrease the Ubl ligase activity of SCF-type complexes such as SCF, CSA or DDB2. The complex is also involved in phosphorylation of p53/TP53, c-jun/JUN, IkappaBalpha/NFKBIA, ITPK1 and IRF8/ICSBP, possibly via its association with CK2 and PKD kinases. CSN-dependent phosphorylation of TP53 and JUN promotes and protects degradation by the Ubl system, respectively. Suppresses G-protein- and mitogen-activated protein kinase-mediated signal transduction. The polypeptide is COP9 signalosome complex subunit 1 (Gps1) (Mus musculus (Mouse)).